An 84-amino-acid polypeptide reads, in one-letter code: Translational regulator CsrA (84 aa).

It belongs to the CsrA/RsmA family. In terms of assembly, homodimer; the beta-strands of each monomer intercalate to form a hydrophobic core, while the alpha-helices form wings that extend away from the core.

The protein localises to the cytoplasm. In terms of biological role, a translational regulator that binds mRNA to regulate translation initiation and/or mRNA stability. Usually binds in the 5'-UTR at or near the Shine-Dalgarno sequence preventing ribosome-binding, thus repressing translation. Its main target seems to be the major flagellin gene, while its function is anatagonized by FliW. This is Translational regulator CsrA from Leptospira borgpetersenii serovar Hardjo-bovis (strain JB197).